A 691-amino-acid chain; its full sequence is NADPH--cytochrome P450 reductase (691 aa).

Topologically, residues 2-7 (PFGIDN) are lumenal. Residues 8-24 (TDFTVLAGLVLAVLLYV) form a helical membrane-spanning segment. At 25 to 691 (KRNSIKELLM…TSGRYQEDVW (667 aa)) the chain is on the cytoplasmic side. One can recognise a Flavodoxin-like domain in the interval 61–204 (YLVLYASQTG…DYMAWKDSIL (144 aa)). Residues 67–72 (SQTGTA), lysine 78, 116–119 (STYG), 152–161 (LGNSTYEFFN), and aspartate 187 each bind FMN. Positions 266–529 (SQPYIAPIVK…HVRRSNFRLP (264 aa)) constitute an FAD-binding FR-type domain. Residue arginine 285 participates in NADP(+) binding. FAD contacts are provided by residues 439–442 (RYYS), 457–459 (TSI), and 476–479 (GVTT). NADP(+) contacts are provided by residues threonine 543, 610–611 (SR), 617–621 (KVYVQ), and aspartate 646. Lysine 666 is covalently cross-linked (Glycyl lysine isopeptide (Lys-Gly) (interchain with G-Cter in ubiquitin)). Tryptophan 691 is an FAD binding site.

The protein belongs to the NADPH--cytochrome P450 reductase family. It in the N-terminal section; belongs to the flavodoxin family. This sequence in the C-terminal section; belongs to the flavoprotein pyridine nucleotide cytochrome reductase family. As to quaternary structure, interacts with PCL1. Requires FAD as cofactor. FMN serves as cofactor. In terms of processing, phosphorylated by the cyclin-CDK PCL1-PHO85.

The protein localises to the endoplasmic reticulum membrane. It localises to the mitochondrion outer membrane. Its subcellular location is the cell membrane. It carries out the reaction 2 oxidized [cytochrome P450] + NADPH = 2 reduced [cytochrome P450] + NADP(+) + H(+). This enzyme is required for electron transfer from NADP to cytochrome P450 in microsomes. It can also provide electron transfer to heme oxygenase and cytochrome B5. Involved in ergosterol biosynthesis. Has NADPH-dependent ferrireductase activity on the plasma membrane. In Saccharomyces cerevisiae (strain ATCC 204508 / S288c) (Baker's yeast), this protein is NADPH--cytochrome P450 reductase.